The chain runs to 60 residues: Single-pass membrane and coiled-coil domain-containing protein 4 homolog (60 aa).

The segment at 1 to 23 (MRKLRGGQTKETRKQRQERKEEN) is disordered. A compositionally biased stretch (basic and acidic residues) spans 8–23 (QTKETRKQRQERKEEN). Residues 8–33 (QTKETRKQRQERKEENLKIQQQMKTI) are a coiled coil. The helical transmembrane segment at 31-51 (KTIVLPTIGVIFLCIVVYVFL) threads the bilayer.

This sequence belongs to the SMCO4 family.

It is found in the membrane. This Anopheles gambiae (African malaria mosquito) protein is Single-pass membrane and coiled-coil domain-containing protein 4 homolog.